Reading from the N-terminus, the 504-residue chain is Cholesterol 7-alpha-monooxygenase (504 aa).

Cys444 contacts heme.

This sequence belongs to the cytochrome P450 family. Requires heme as cofactor.

The protein resides in the endoplasmic reticulum membrane. The protein localises to the microsome membrane. The enzyme catalyses cholesterol + reduced [NADPH--hemoprotein reductase] + O2 = 7alpha-hydroxycholesterol + oxidized [NADPH--hemoprotein reductase] + H2O + H(+). The protein operates within lipid metabolism; bile acid biosynthesis. In terms of biological role, catalyzes a rate-limiting step in cholesterol catabolism and bile acid biosynthesis by introducing a hydrophilic moiety at position 7 of cholesterol. Important for cholesterol homeostasis. This Cricetulus griseus (Chinese hamster) protein is Cholesterol 7-alpha-monooxygenase (CYP7A1).